A 491-amino-acid chain; its full sequence is ATP synthase subunit beta, chloroplastic (491 aa).

Position 172-179 (172-179) interacts with ATP; the sequence is GGAGVGKT.

It belongs to the ATPase alpha/beta chains family. F-type ATPases have 2 components, CF(1) - the catalytic core - and CF(0) - the membrane proton channel. CF(1) has five subunits: alpha(3), beta(3), gamma(1), delta(1), epsilon(1). CF(0) has four main subunits: a(1), b(1), b'(1) and c(9-12).

The protein resides in the plastid. Its subcellular location is the chloroplast thylakoid membrane. It catalyses the reaction ATP + H2O + 4 H(+)(in) = ADP + phosphate + 5 H(+)(out). In terms of biological role, produces ATP from ADP in the presence of a proton gradient across the membrane. The catalytic sites are hosted primarily by the beta subunits. The sequence is that of ATP synthase subunit beta, chloroplastic from Pisum sativum (Garden pea).